The chain runs to 770 residues: uncharacterized protein (770 aa).

Positions 736–770 (GSGQPGQSPANVGDDPNRMVQSSASQTQIGHVFNN) are disordered. Residues 754–770 (MVQSSASQTQIGHVFNN) are compositionally biased toward polar residues.

This is an uncharacterized protein from Caenorhabditis elegans.